The primary structure comprises 100 residues: Aspartyl/glutamyl-tRNA(Asn/Gln) amidotransferase subunit C (100 aa).

It belongs to the GatC family. As to quaternary structure, heterotrimer of A, B and C subunits.

The catalysed reaction is L-glutamyl-tRNA(Gln) + L-glutamine + ATP + H2O = L-glutaminyl-tRNA(Gln) + L-glutamate + ADP + phosphate + H(+). It catalyses the reaction L-aspartyl-tRNA(Asn) + L-glutamine + ATP + H2O = L-asparaginyl-tRNA(Asn) + L-glutamate + ADP + phosphate + 2 H(+). Allows the formation of correctly charged Asn-tRNA(Asn) or Gln-tRNA(Gln) through the transamidation of misacylated Asp-tRNA(Asn) or Glu-tRNA(Gln) in organisms which lack either or both of asparaginyl-tRNA or glutaminyl-tRNA synthetases. The reaction takes place in the presence of glutamine and ATP through an activated phospho-Asp-tRNA(Asn) or phospho-Glu-tRNA(Gln). This chain is Aspartyl/glutamyl-tRNA(Asn/Gln) amidotransferase subunit C, found in Rickettsia rickettsii (strain Sheila Smith).